A 431-amino-acid chain; its full sequence is Histidine--tRNA ligase (431 aa).

It belongs to the class-II aminoacyl-tRNA synthetase family. As to quaternary structure, homodimer.

Its subcellular location is the cytoplasm. It carries out the reaction tRNA(His) + L-histidine + ATP = L-histidyl-tRNA(His) + AMP + diphosphate + H(+). The polypeptide is Histidine--tRNA ligase (Levilactobacillus brevis (strain ATCC 367 / BCRC 12310 / CIP 105137 / JCM 1170 / LMG 11437 / NCIMB 947 / NCTC 947) (Lactobacillus brevis)).